Reading from the N-terminus, the 462-residue chain is MDKKQLLRNLPKIDELLKEEIVNRYLQENSRTLVVDSLRQSIDYYRGEILKNNIDSFTKENVVNYFIDTLEENKSTKFKKVINATGVVIHTNLGRSLLAKEAIENVVKVSENYSNLEYDLKEGKRGSRYSHVEELIKKVTGAEAAMVVNNNAAAVMLALNTLCEEREAIVSRGQLVEIGGSFRVPDVMKFSRAHLVEVGTTNRTHLYDYENNINENTGVLLKVHTSNFKIMGFTEEVSSEEMVQLGGKYKLPVMEDIGSGTLVDFSKYGFTYEPTVQSSLEKGVDVVTFSGDKMLGGPQAGIIVGKKKYIDKMKKNQLTRALRIDKMTLAALEGTLKCYIDEKEAIENIPTLNMILSSKDIHKKRAQRLKRRLQNNVKDFNFKVSEDLSMVGGGSMPGERIPTYVVKVNSDKITAEKIEEKLRLSKNPIIVRVSKDEVILDVRTLFERDFNIIVEEFKKLLK.

Lys293 carries the post-translational modification N6-(pyridoxal phosphate)lysine.

This sequence belongs to the SelA family. Pyridoxal 5'-phosphate is required as a cofactor.

The protein resides in the cytoplasm. The enzyme catalyses L-seryl-tRNA(Sec) + selenophosphate + H(+) = L-selenocysteinyl-tRNA(Sec) + phosphate. It participates in aminoacyl-tRNA biosynthesis; selenocysteinyl-tRNA(Sec) biosynthesis; selenocysteinyl-tRNA(Sec) from L-seryl-tRNA(Sec) (bacterial route): step 1/1. Converts seryl-tRNA(Sec) to selenocysteinyl-tRNA(Sec) required for selenoprotein biosynthesis. The polypeptide is L-seryl-tRNA(Sec) selenium transferase (Clostridium botulinum (strain ATCC 19397 / Type A)).